Here is a 244-residue protein sequence, read N- to C-terminus: 5-oxoprolinase subunit A (244 aa).

Belongs to the LamB/PxpA family. In terms of assembly, forms a complex composed of PxpA, PxpB and PxpC.

It catalyses the reaction 5-oxo-L-proline + ATP + 2 H2O = L-glutamate + ADP + phosphate + H(+). Functionally, catalyzes the cleavage of 5-oxoproline to form L-glutamate coupled to the hydrolysis of ATP to ADP and inorganic phosphate. This is 5-oxoprolinase subunit A from Shigella flexneri.